Consider the following 311-residue polypeptide: Taste receptor type 2 member 9 (311 aa).

The Extracellular portion of the chain corresponds to 1–9; sequence MPSTIEAIY. Residues 10–32 traverse the membrane as a helical segment; the sequence is IILIAGELTIGIWGNGFIVLVNC. At 33–52 the chain is on the cytoplasmic side; it reads IDWLKRRDVSLIDIILISLA. The chain crosses the membrane as a helical span at residues 53–72; that stretch reads ISRICLLCVISLDGFFILLF. Residues 73 to 86 lie on the Extracellular side of the membrane; it reads PGTYDTNVLESIMD. Residues 87–109 form a helical membrane-spanning segment; the sequence is AVWTFANNSSLWFTSCLSIFYLL. Residues 110–128 are Cytoplasmic-facing; sequence KIANISHPFFFWLKLKINK. The helical transmembrane segment at 129–146 threads the bilayer; that stretch reads VILAILLGSFLISLIISF. Topologically, residues 147–179 are extracellular; sequence PINGMWYNLFKVSHEENITWAFKVSTIPGAFKQ. The N-linked (GlcNAc...) asparagine glycan is linked to asparagine 163. Residues 180–202 form a helical membrane-spanning segment; that stretch reads LTLNLGAMVPFILCLISFFLLLF. The Cytoplasmic segment spans residues 203 to 233; it reads SLVRHTKQIQLHATGFRDPSTEAHMRAVKAV. The helical transmembrane segment at 234 to 256 threads the bilayer; it reads IIFLLLLILYYPVFLVMTSSTLI. The Extracellular portion of the chain corresponds to 257–260; the sequence is PQGK. Residues 261–283 form a helical membrane-spanning segment; sequence LVLMIGDIVTVIFPSSHSFILIM. Over 284–311 the chain is Cytoplasmic; sequence GNSKLRAAFLKMLRFVKGFLRRRKPFVP.

Belongs to the G-protein coupled receptor T2R family.

It localises to the membrane. Gustducin-coupled receptor implicated in the perception of bitter compounds in the oral cavity and the gastrointestinal tract. Signals through PLCB2 and the calcium-regulated cation channel TRPM5. In Macaca mulatta (Rhesus macaque), this protein is Taste receptor type 2 member 9 (TAS2R9).